The sequence spans 64 residues: Ferredoxin-like protein in nif region (64 aa).

The 29-residue stretch at 2 to 30 (AFKIIASQCTQCGACEFECPSNAIELKGE) folds into the 4Fe-4S ferredoxin-type domain. C10, C13, C16, C20, C39, C42, C51, and C55 together coordinate [4Fe-4S] cluster.

Requires [4Fe-4S] cluster as cofactor.

The chain is Ferredoxin-like protein in nif region (fdxN) from Sinorhizobium fredii (strain NBRC 101917 / NGR234).